Consider the following 278-residue polypeptide: Keratin-associated protein 5-1 (278 aa).

Repeat copies occupy residues 42–45 (CCVP), 48–51 (CCKP), 130–133 (CCVP), 136–139 (CCKP), 142–145 (CCVP), 239–242 (CCKP), 258–261 (CCKP), and 268–271 (CCVP). An 8 X 4 AA repeats of C-C-X-P region spans residues 42-271 (CCVPVCCCKP…CCSQSSCCVP (230 aa)).

It belongs to the KRTAP type 5 family. In terms of assembly, interacts with hair keratins. Expressed in hair root but not in skin. Expressed also in lung, pancreas, ovary, testis.

In terms of biological role, in the hair cortex, hair keratin intermediate filaments are embedded in an interfilamentous matrix, consisting of hair keratin-associated protein (KRTAP), which are essential for the formation of a rigid and resistant hair shaft through their extensive disulfide bond cross-linking with abundant cysteine residues of hair keratins. The matrix proteins include the high-sulfur and high-glycine-tyrosine keratins. The polypeptide is Keratin-associated protein 5-1 (KRTAP5-1) (Homo sapiens (Human)).